We begin with the raw amino-acid sequence, 113 residues long: MQAKAVTKYVRISPTKVRPVMDLVRGKPVDRALAILRYLPHKAAREIARTIESARANATNNYDMAPDALIVKYIFADEGPAFKRIMPRARGRADRIRKRTTHITVIVDDGEEM.

It belongs to the universal ribosomal protein uL22 family. Part of the 50S ribosomal subunit.

This protein binds specifically to 23S rRNA; its binding is stimulated by other ribosomal proteins, e.g. L4, L17, and L20. It is important during the early stages of 50S assembly. It makes multiple contacts with different domains of the 23S rRNA in the assembled 50S subunit and ribosome. In terms of biological role, the globular domain of the protein is located near the polypeptide exit tunnel on the outside of the subunit, while an extended beta-hairpin is found that lines the wall of the exit tunnel in the center of the 70S ribosome. In Roseiflexus sp. (strain RS-1), this protein is Large ribosomal subunit protein uL22.